A 290-amino-acid chain; its full sequence is 4-hydroxy-tetrahydrodipicolinate synthase (290 aa).

Residue threonine 44 coordinates pyruvate. Tyrosine 132 functions as the Proton donor/acceptor in the catalytic mechanism. Lysine 160 functions as the Schiff-base intermediate with substrate in the catalytic mechanism. Pyruvate is bound at residue isoleucine 202.

Belongs to the DapA family. As to quaternary structure, homotetramer; dimer of dimers.

The protein localises to the cytoplasm. The catalysed reaction is L-aspartate 4-semialdehyde + pyruvate = (2S,4S)-4-hydroxy-2,3,4,5-tetrahydrodipicolinate + H2O + H(+). It participates in amino-acid biosynthesis; L-lysine biosynthesis via DAP pathway; (S)-tetrahydrodipicolinate from L-aspartate: step 3/4. Functionally, catalyzes the condensation of (S)-aspartate-beta-semialdehyde [(S)-ASA] and pyruvate to 4-hydroxy-tetrahydrodipicolinate (HTPA). This chain is 4-hydroxy-tetrahydrodipicolinate synthase, found in Ruegeria pomeroyi (strain ATCC 700808 / DSM 15171 / DSS-3) (Silicibacter pomeroyi).